The sequence spans 114 residues: Putative antiporter subunit mnhC2 (114 aa).

Helical transmembrane passes span 3–23 (LILL…ILSI), 28–48 (IVIG…SMGT), and 72–92 (AIVL…LVLV).

Belongs to the CPA3 antiporters (TC 2.A.63) subunit C family. In terms of assembly, may form a heterooligomeric complex that consists of seven subunits: mnhA2, mnhB2, mnhC2, mnhD2, mnhE2, mnhF2 and mnhG2.

It is found in the cell membrane. The sequence is that of Putative antiporter subunit mnhC2 (mnhC2) from Staphylococcus aureus (strain Mu3 / ATCC 700698).